The primary structure comprises 561 residues: Malate synthase, glyoxysomal (561 aa).

The active-site Proton acceptor is Arg-177. Asp-462 acts as the Proton donor in catalysis. Positions 559–561 (SRL) match the Microbody targeting signal motif.

The protein belongs to the malate synthase family.

It is found in the glyoxysome. The catalysed reaction is glyoxylate + acetyl-CoA + H2O = (S)-malate + CoA + H(+). The protein operates within carbohydrate metabolism; glyoxylate cycle; (S)-malate from isocitrate: step 2/2. This chain is Malate synthase, glyoxysomal, found in Brassica napus (Rape).